We begin with the raw amino-acid sequence, 247 residues long: UDP-2,3-diacylglucosamine hydrolase (247 aa).

Residues aspartate 8, histidine 10, aspartate 41, asparagine 79, and histidine 114 each contribute to the Mn(2+) site. Substrate is bound at residue 79 to 80 (NR). Residues aspartate 122, serine 160, aspartate 171, glutamine 174, and histidine 202 each coordinate substrate. Histidine 202 and histidine 204 together coordinate Mn(2+).

The protein belongs to the LpxH family. Requires Mn(2+) as cofactor.

It is found in the cell inner membrane. The enzyme catalyses UDP-2-N,3-O-bis[(3R)-3-hydroxytetradecanoyl]-alpha-D-glucosamine + H2O = 2-N,3-O-bis[(3R)-3-hydroxytetradecanoyl]-alpha-D-glucosaminyl 1-phosphate + UMP + 2 H(+). It functions in the pathway glycolipid biosynthesis; lipid IV(A) biosynthesis; lipid IV(A) from (3R)-3-hydroxytetradecanoyl-[acyl-carrier-protein] and UDP-N-acetyl-alpha-D-glucosamine: step 4/6. Hydrolyzes the pyrophosphate bond of UDP-2,3-diacylglucosamine to yield 2,3-diacylglucosamine 1-phosphate (lipid X) and UMP by catalyzing the attack of water at the alpha-P atom. Involved in the biosynthesis of lipid A, a phosphorylated glycolipid that anchors the lipopolysaccharide to the outer membrane of the cell. This chain is UDP-2,3-diacylglucosamine hydrolase, found in Xanthomonas campestris pv. campestris (strain B100).